Reading from the N-terminus, the 779-residue chain is Translation initiation factor IF-2 (779 aa).

The segment at 44 to 193 (RQLDNAVDGT…TPPKPKELPE (150 aa)) is disordered. The span at 53–65 (TNKKAEAPKKETT) shows a compositional bias: basic and acidic residues. Residues 66–81 (SNENGNSKGPNKPNMT) show a composition bias toward polar residues. Composition is skewed to low complexity over residues 82-93 (NSNEKSNKPNKP) and 117-167 (ANTS…NNKG). A tr-type G domain is found at 280–449 (ERPPVVTIMG…LLVSEVEELK (170 aa)). Positions 289-296 (GHVDHGKT) are G1. 289-296 (GHVDHGKT) is a GTP binding site. The G2 stretch occupies residues 314–318 (GITQH). Positions 335–338 (DTPG) are G3. Residues 335–339 (DTPGH) and 389–392 (NKID) contribute to the GTP site. The segment at 389–392 (NKID) is G4. The G5 stretch occupies residues 425–427 (SAK).

This sequence belongs to the TRAFAC class translation factor GTPase superfamily. Classic translation factor GTPase family. IF-2 subfamily.

The protein resides in the cytoplasm. In terms of biological role, one of the essential components for the initiation of protein synthesis. Protects formylmethionyl-tRNA from spontaneous hydrolysis and promotes its binding to the 30S ribosomal subunits. Also involved in the hydrolysis of GTP during the formation of the 70S ribosomal complex. The polypeptide is Translation initiation factor IF-2 (Listeria monocytogenes serovar 1/2a (strain ATCC BAA-679 / EGD-e)).